The primary structure comprises 204 residues: Signal peptidase I (204 aa).

The Cytoplasmic portion of the chain corresponds to 1-10 (MNLFKNFLKE). Residues 11–30 (WGLFLLILSLLALSRIFFWS) traverse the membrane as a helical segment. Topologically, residues 31 to 204 (NVRVEGHSMD…FWPITRIGTF (174 aa)) are extracellular. Active-site residues include S38 and K76.

This sequence belongs to the peptidase S26 family.

Its subcellular location is the cell membrane. The catalysed reaction is Cleavage of hydrophobic, N-terminal signal or leader sequences from secreted and periplasmic proteins.. In Streptococcus pneumoniae (strain ATCC BAA-255 / R6), this protein is Signal peptidase I (lepB).